The sequence spans 79 residues: CDC42 small effector protein 1 (79 aa).

S-palmitoyl cysteine attachment occurs at residues Cys-10 and Cys-11. In terms of domain architecture, CRIB spans Ile-30–Gly-43. Residues Gly-48–Leu-79 are disordered. Basic and acidic residues predominate over residues Met-63–Pro-72.

Belongs to the CDC42SE/SPEC family. Interacts with CDC42 (in GTP-bound form). Interacts weakly with RAC1 and not at all with RHOA.

It localises to the cytoplasm. The protein localises to the cytoskeleton. The protein resides in the cell membrane. Probably involved in the organization of the actin cytoskeleton by acting downstream of CDC42, inducing actin filament assembly. Alters CDC42-induced cell shape changes. In activated T-cells, may play a role in CDC42-mediated F-actin accumulation at the immunological synapse. May play a role in early contractile events in phagocytosis in macrophages. The sequence is that of CDC42 small effector protein 1 (Cdc42se1) from Rattus norvegicus (Rat).